A 445-amino-acid chain; its full sequence is Tryptamine benzoyltransferase 1 (445 aa).

Residues histidine 150 and aspartate 382 each act as proton acceptor in the active site.

Belongs to the plant acyltransferase family.

Hydroxycinnamoyl transferase that catalyzes the transfer of an acyl from benzoyl-CoA to tryptamine, to produce benzoyl tryptamine. Serotonin and tyramine serve as acyl acceptors in vitro. Can use p-coumaroyl-CoA, and to a lesser extent caffeoyl-CoA, as acyl donors. This is Tryptamine benzoyltransferase 1 from Oryza sativa subsp. japonica (Rice).